The primary structure comprises 310 residues: MEAENHTTVAELIILGLTEDPKLCIVFFVIFLGVYIITLVGNISIITLIRISSQLHTPMYLFLSHLAFVDIVFSTSVSVIMLMELLGHGLVLSVATCAAQLCMTVSFGSAECFLLAAMAYDRYVAICSPLLYSTLMSSRVCFLLLGISYVGGFVNGWTFTGCVLSLSFCGPTQINHFFCDFSPLLKVSCSDVSIIGIIPSISSGSIIVVTVFVIAVSYIYILITILKMRSTEGRHKAFSTCTSHLTAVTLFYGTITVIYVMPKSSYSTEQNKVISLFYTVVIPMLNPLIYSLRNRDVKDALRKAIVRVYS.

Residues 1 to 25 are Extracellular-facing; sequence MEAENHTTVAELIILGLTEDPKLCI. Asparagine 5 carries an N-linked (GlcNAc...) asparagine glycan. Residues 26–46 traverse the membrane as a helical segment; it reads VFFVIFLGVYIITLVGNISII. Topologically, residues 47–54 are cytoplasmic; that stretch reads TLIRISSQ. A helical transmembrane segment spans residues 55–75; it reads LHTPMYLFLSHLAFVDIVFST. Topologically, residues 76–99 are extracellular; sequence SVSVIMLMELLGHGLVLSVATCAA. Cysteine 97 and cysteine 189 form a disulfide bridge. A helical membrane pass occupies residues 100–120; that stretch reads QLCMTVSFGSAECFLLAAMAY. At 121 to 133 the chain is on the cytoplasmic side; that stretch reads DRYVAICSPLLYS. Residues 134–154 form a helical membrane-spanning segment; the sequence is TLMSSRVCFLLLGISYVGGFV. Over 155-196 the chain is Extracellular; the sequence is NGWTFTGCVLSLSFCGPTQINHFFCDFSPLLKVSCSDVSIIG. A helical membrane pass occupies residues 197–217; it reads IIPSISSGSIIVVTVFVIAVS. Residues 218–237 are Cytoplasmic-facing; the sequence is YIYILITILKMRSTEGRHKA. A helical membrane pass occupies residues 238-258; it reads FSTCTSHLTAVTLFYGTITVI. Residues 259–271 are Extracellular-facing; sequence YVMPKSSYSTEQN. A helical transmembrane segment spans residues 272–292; that stretch reads KVISLFYTVVIPMLNPLIYSL. At 293 to 310 the chain is on the cytoplasmic side; that stretch reads RNRDVKDALRKAIVRVYS.

It belongs to the G-protein coupled receptor 1 family.

It is found in the cell membrane. In terms of biological role, potential odorant receptor. The chain is Olfactory receptor 5P52 from Mus musculus (Mouse).